The following is a 1399-amino-acid chain: DNA-directed RNA polymerase subunit beta' (1399 aa).

Zn(2+) is bound by residues Cys-70, Cys-72, Cys-85, and Cys-88. Mg(2+) contacts are provided by Asp-460, Asp-462, and Asp-464. Zn(2+)-binding residues include Cys-814, Cys-888, Cys-895, and Cys-898.

It belongs to the RNA polymerase beta' chain family. As to quaternary structure, the RNAP catalytic core consists of 2 alpha, 1 beta, 1 beta' and 1 omega subunit. When a sigma factor is associated with the core the holoenzyme is formed, which can initiate transcription. It depends on Mg(2+) as a cofactor. Zn(2+) is required as a cofactor.

It carries out the reaction RNA(n) + a ribonucleoside 5'-triphosphate = RNA(n+1) + diphosphate. In terms of biological role, DNA-dependent RNA polymerase catalyzes the transcription of DNA into RNA using the four ribonucleoside triphosphates as substrates. The polypeptide is DNA-directed RNA polymerase subunit beta' (Stutzerimonas stutzeri (strain A1501) (Pseudomonas stutzeri)).